Here is a 113-residue protein sequence, read N- to C-terminus: Protein FMC1 homolog (113 aa).

Positions 94–113 (SAGLVGLKLPHQPGGKGWEP) are disordered.

This sequence belongs to the FMC1 family. In terms of assembly, interacts with ATPAF2.

It localises to the mitochondrion. Its function is as follows. Plays a role in the assembly/stability of the mitochondrial membrane ATP synthase (F(1)F(0) ATP synthase or Complex V). The protein is Protein FMC1 homolog of Homo sapiens (Human).